A 291-amino-acid chain; its full sequence is N-acetylmannosamine kinase (291 aa).

Residues 5–12 (AIDIGGTK) and 132–139 (GVGGGVVC) contribute to the ATP site. Residues His-156, Cys-166, Cys-168, and Cys-173 each coordinate Zn(2+).

Belongs to the ROK (NagC/XylR) family. NanK subfamily. As to quaternary structure, homodimer.

It catalyses the reaction an N-acyl-D-mannosamine + ATP = an N-acyl-D-mannosamine 6-phosphate + ADP + H(+). It functions in the pathway amino-sugar metabolism; N-acetylneuraminate degradation; D-fructose 6-phosphate from N-acetylneuraminate: step 2/5. Functionally, catalyzes the phosphorylation of N-acetylmannosamine (ManNAc) to ManNAc-6-P. The sequence is that of N-acetylmannosamine kinase from Salmonella arizonae (strain ATCC BAA-731 / CDC346-86 / RSK2980).